The following is a 150-amino-acid chain: Arginine repressor (150 aa).

This sequence belongs to the ArgR family.

The protein resides in the cytoplasm. It participates in amino-acid biosynthesis; L-arginine biosynthesis [regulation]. Functionally, regulates arginine biosynthesis genes. In Clostridium botulinum (strain Eklund 17B / Type B), this protein is Arginine repressor.